A 180-amino-acid chain; its full sequence is MFPMVTGFMSYGQQTIRAARYIGQSFIITLSHTNRLPITIHYPYEKSITSERFRGRIHFEFDKCIACEVCVRVCPIDLPLVDWRFEKDIKRKQLLNYSIDFGVCIFCGNCVEYCPTNCLSMTEEYELSTYDRHELNYNQIALSRLPISIMGDYTIQTIRNSTQSKIDEEKSWNSRTITDY.

4Fe-4S ferredoxin-type domains are found at residues 55 to 84 (GRIH…VDWR) and 95 to 124 (LNYS…MTEE). The [4Fe-4S] cluster site is built by C64, C67, C70, C74, C104, C107, C110, and C114.

The protein belongs to the complex I 23 kDa subunit family. As to quaternary structure, NDH is composed of at least 16 different subunits, 5 of which are encoded in the nucleus. [4Fe-4S] cluster is required as a cofactor.

It localises to the plastid. The protein localises to the chloroplast thylakoid membrane. It carries out the reaction a plastoquinone + NADH + (n+1) H(+)(in) = a plastoquinol + NAD(+) + n H(+)(out). The enzyme catalyses a plastoquinone + NADPH + (n+1) H(+)(in) = a plastoquinol + NADP(+) + n H(+)(out). Functionally, NDH shuttles electrons from NAD(P)H:plastoquinone, via FMN and iron-sulfur (Fe-S) centers, to quinones in the photosynthetic chain and possibly in a chloroplast respiratory chain. The immediate electron acceptor for the enzyme in this species is believed to be plastoquinone. Couples the redox reaction to proton translocation, and thus conserves the redox energy in a proton gradient. In Oryza nivara (Indian wild rice), this protein is NAD(P)H-quinone oxidoreductase subunit I, chloroplastic.